The chain runs to 549 residues: Ceramide kinase 1 (549 aa).

The 155-residue stretch at 162-316 folds into the DAGKc domain; sequence NRPKNIIIFI…VDVCTVHQHQ (155 aa). ATP-binding positions include 172-174 and 205-209; these read NPF and TERAN. Position 233–236 (233–236) interacts with substrate; the sequence is GGDG. Residue aspartate 235 is the Proton donor/acceptor of the active site. Residues glutamate 240, 277–279, arginine 342, arginine 348, and 500–502 each bind ATP; these read GSA and DGE.

The catalysed reaction is an N-acylsphing-4-enine + ATP = an N-acylsphing-4-enine 1-phosphate + ADP + H(+). It carries out the reaction an N-acyl-15-methylhexadecasphing-4-enine + ATP = an N-acyl-15-methylhexadecasphing-4-enine-1-phosphate + ADP + H(+). It functions in the pathway lipid metabolism; sphingolipid metabolism. In terms of biological role, catalyzes the phosphorylation of ceramide to form ceramide 1-phosphate. C.elegans contain specific sphingoid bases, which are unique or different in structure compared to the sphingoid bases found in other animals. Two examples of these distinctive compounds are: 15-methylhexadecasphinganine and 15-methylhexadecasphing-4-enine. The chain is Ceramide kinase 1 from Caenorhabditis elegans.